The sequence spans 404 residues: Keratin, type I cuticular Ha3-I (404 aa).

A head region spans residues 1–56; sequence MPYNCCLPAMSCRTSCSSRPCVPPSCHGCTLPGACNIPANVGNCNWFCEGSFNGNE. The region spanning 56–367 is the IF rod domain; the sequence is EKETMQFLND…GLLESEDCKL (312 aa). Positions 57 to 91 are coil 1A; sequence KETMQFLNDRLASYMEKVRQLERENAELECRIQER. Residues 92-102 are linker 1; it reads NQQQDPLVCPA. The segment at 103 to 203 is coil 1B; it reads YQAYFRTIEE…HEQEVNTLRC (101 aa). Residues 204-219 are linker 12; the sequence is QLGDRLNVEVDAAPTV. Positions 220-363 are coil 2; the sequence is DLNRVLNETR…NTYRGLLESE (144 aa). The interval 364 to 404 is tail; the sequence is DCKLPCNPCATTNACDKPIGPCVPNPCVTRPRCGPCNTFVR.

This sequence belongs to the intermediate filament family.

The chain is Keratin, type I cuticular Ha3-I from Mus musculus (Mouse).